Consider the following 205-residue polypeptide: Outer-membrane lipoprotein LolB (205 aa).

Residues 1–17 (MFLRHVIVFSLIALLTG) form the signal peptide. Cys-18 carries N-palmitoyl cysteine lipidation. Residue Cys-18 is the site of S-diacylglycerol cysteine attachment.

This sequence belongs to the LolB family. In terms of assembly, monomer.

The protein resides in the cell outer membrane. Its function is as follows. Plays a critical role in the incorporation of lipoproteins in the outer membrane after they are released by the LolA protein. This Pseudomonas syringae pv. syringae (strain B728a) protein is Outer-membrane lipoprotein LolB.